The chain runs to 236 residues: Urease accessory protein UreF (236 aa).

It belongs to the UreF family. As to quaternary structure, ureD, UreF and UreG form a complex that acts as a GTP-hydrolysis-dependent molecular chaperone, activating the urease apoprotein by helping to assemble the nickel containing metallocenter of UreC. The UreE protein probably delivers the nickel.

Its subcellular location is the cytoplasm. In terms of biological role, required for maturation of urease via the functional incorporation of the urease nickel metallocenter. This is Urease accessory protein UreF from Granulibacter bethesdensis (strain ATCC BAA-1260 / CGDNIH1).